A 638-amino-acid chain; its full sequence is 3D-(3,5/4)-trihydroxycyclohexane-1,2-dione hydrolase (638 aa).

Thiamine diphosphate is bound at residue Glu-67. A thiamine pyrophosphate binding region spans residues 442–523 (SLPGDLQRLW…INIMLFDNSG (82 aa)). Positions 494 and 521 each coordinate Mg(2+).

The protein belongs to the TPP enzyme family. Mg(2+) is required as a cofactor. Requires thiamine diphosphate as cofactor.

It catalyses the reaction 3D-3,5/4-trihydroxycyclohexane-1,2-dione + H2O = 5-deoxy-D-glucuronate + H(+). The protein operates within polyol metabolism; myo-inositol degradation into acetyl-CoA; acetyl-CoA from myo-inositol: step 3/7. In terms of biological role, involved in the cleavage of the C1-C2 bond of 3D-(3,5/4)-trihydroxycyclohexane-1,2-dione (THcHDO) to yield 5-deoxy-glucuronate (5DG). The chain is 3D-(3,5/4)-trihydroxycyclohexane-1,2-dione hydrolase from Listeria monocytogenes serovar 1/2a (strain ATCC BAA-679 / EGD-e).